The following is a 900-amino-acid chain: Probable dipeptidyl-aminopeptidase B (900 aa).

The disordered stretch occupies residues 1-83 (MARTDQGLGA…DILSHPRDKS (83 aa)). At 1–90 (MARTDQGLGA…DKSKRSRGSR (90 aa)) the chain is on the cytoplasmic side. Residues 24-39 (NSFSSTDSLSTDGSLF) show a composition bias toward low complexity. Residues 44–55 (NATQFQKSTQLP) are compositionally biased toward polar residues. Residues 91–111 (WIWVIGLLCLGGWILAFILFW) form a helical; Signal-anchor for type II membrane protein membrane-spanning segment. The Vacuolar segment spans residues 112–900 (GRRNNNSDIS…HHVGSALAAT (789 aa)). Asn-150, Asn-195, Asn-348, Asn-410, Asn-514, Asn-639, and Asn-644 each carry an N-linked (GlcNAc...) asparagine glycan. Ser-753 serves as the catalytic Charge relay system. N-linked (GlcNAc...) asparagine glycosylation occurs at Asn-812. Residues Asp-830 and His-863 each act as charge relay system in the active site.

This sequence belongs to the peptidase S9B family.

It localises to the vacuole membrane. It carries out the reaction Release of an N-terminal dipeptide, Xaa-Yaa-|-Zaa-, from a polypeptide, preferentially when Yaa is Pro, provided Zaa is neither Pro nor hydroxyproline.. Its function is as follows. Type IV dipeptidyl-peptidase which removes N-terminal dipeptides sequentially from polypeptides having unsubstituted N-termini provided that the penultimate residue is proline. The protein is Probable dipeptidyl-aminopeptidase B (dapB) of Talaromyces stipitatus (strain ATCC 10500 / CBS 375.48 / QM 6759 / NRRL 1006) (Penicillium stipitatum).